Reading from the N-terminus, the 97-residue chain is Large ribosomal subunit protein eL21 (97 aa).

The disordered stretch occupies residues 1 to 23; sequence MTKMSKGPRSGSRRVMTKSVKNK.

Belongs to the eukaryotic ribosomal protein eL21 family.

This is Large ribosomal subunit protein eL21 from Picrophilus torridus (strain ATCC 700027 / DSM 9790 / JCM 10055 / NBRC 100828 / KAW 2/3).